The chain runs to 62 residues: Frontoxin III (62 aa).

4 cysteine pairs are disulfide-bonded: Cys3/Cys24, Cys17/Cys41, Cys43/Cys54, and Cys55/Cys60.

As to expression, expressed by the venom gland.

Its subcellular location is the secreted. Binds to muscle nicotinic acetylcholine receptor (nAChR) and inhibit acetylcholine from binding to the receptor, thereby impairing neuromuscular transmission. This is Frontoxin III from Micrurus frontalis (Coral snake).